The primary structure comprises 123 residues: Iron-sulfur cluster insertion protein ErpA (123 aa).

The iron-sulfur cluster site is built by cysteine 51, cysteine 115, and cysteine 117.

This sequence belongs to the HesB/IscA family. Homodimer. Requires iron-sulfur cluster as cofactor.

Its function is as follows. Required for insertion of 4Fe-4S clusters for at least IspG. This chain is Iron-sulfur cluster insertion protein ErpA, found in Halorhodospira halophila (strain DSM 244 / SL1) (Ectothiorhodospira halophila (strain DSM 244 / SL1)).